We begin with the raw amino-acid sequence, 118 residues long: NADH-quinone oxidoreductase subunit A (118 aa).

3 helical membrane-spanning segments follow: residues 5–25, 61–81, and 90–110; these read FAAVGIALVVAIAINLIMMLM, FLYALVFTAFDVETVFLFPWA, and FAFIEMFVFIVILLVGFWYAW.

It belongs to the complex I subunit 3 family. NDH-1 is composed of 14 different subunits. Subunits NuoA, H, J, K, L, M, N constitute the membrane sector of the complex.

It localises to the cell membrane. The enzyme catalyses a quinone + NADH + 5 H(+)(in) = a quinol + NAD(+) + 4 H(+)(out). Its function is as follows. NDH-1 shuttles electrons from NADH, via FMN and iron-sulfur (Fe-S) centers, to quinones in the respiratory chain. The immediate electron acceptor for the enzyme in this species is believed to be a menaquinone. Couples the redox reaction to proton translocation (for every two electrons transferred, four hydrogen ions are translocated across the cytoplasmic membrane), and thus conserves the redox energy in a proton gradient. The polypeptide is NADH-quinone oxidoreductase subunit A (Desulfitobacterium hafniense (strain Y51)).